A 510-amino-acid chain; its full sequence is Thermostable carboxypeptidase 1 (510 aa).

The Peptidase M32 domain occupies 3–506 (PEAAYQNLLE…FLAYLEKKYA (504 aa)). The HPF motif lies at 245–247 (HPF). Residues 255–259 (DVRIT) carry the DXRXT motif. Residue His276 participates in Zn(2+) binding. The short motif at 276–280 (HEMGH) is the HEXXH element. Residue Glu277 is the Proton donor/acceptor of the active site. 2 residues coordinate Zn(2+): His280 and Glu306. The HES/GQ motif lies at 305 to 308 (HESQ). Residues 357–362 (IRVEAD) carry the I/NRXXA/SD motif. Positions 412 to 419 (GVMQDVHW) match the GXXQDXHW motif.

This sequence belongs to the peptidase M32 family. In terms of assembly, homodimer. It depends on Zn(2+) as a cofactor.

The enzyme catalyses Release of a C-terminal amino acid with broad specificity, except for -Pro.. Its function is as follows. Broad specificity carboxypetidase that releases amino acids sequentially from the C-terminus, including neutral, aromatic, polar and basic residues, but not Pro. Has lower activity with substrates ending with Gly or Glu. The polypeptide is Thermostable carboxypeptidase 1 (Thermus thermophilus (strain ATCC 27634 / DSM 579 / HB8)).